We begin with the raw amino-acid sequence, 308 residues long: Ribosome maturation factor RimP (308 aa).

3 disordered regions span residues 1–31 (MARA…AADA), 94–113 (EDIG…AAGG), and 249–308 (DLDE…EMNR). Low complexity predominate over residues 17-31 (APSRRTGGARAAADA). Residues 99 to 113 (DGAGGTGGSGGAAGG) are compositionally biased toward gly residues. A compositionally biased stretch (acidic residues) spans 249-269 (DLDEGLEDDDGLEDEDDEDEY).

Belongs to the RimP family.

The protein localises to the cytoplasm. Required for maturation of 30S ribosomal subunits. This Parafrankia sp. (strain EAN1pec) protein is Ribosome maturation factor RimP.